The primary structure comprises 260 residues: Manganese transport system ATP-binding protein MntA (260 aa).

Residues 10-245 (ISVDGVSVTY…NLELTFGGLP (236 aa)) form the ABC transporter domain. Position 43–50 (43–50 (GPNGSGKS)) interacts with ATP.

It belongs to the ABC transporter superfamily.

Functionally, part of an ATP-driven transport system for manganese. This Synechocystis sp. (strain ATCC 27184 / PCC 6803 / Kazusa) protein is Manganese transport system ATP-binding protein MntA (mntA).